A 425-amino-acid chain; its full sequence is Serine--tRNA ligase (425 aa).

Residue 231 to 233 (TAE) participates in L-serine binding. ATP-binding positions include 262–264 (RTE) and valine 278. Position 285 (glutamate 285) interacts with L-serine. An ATP-binding site is contributed by 349–352 (EVTS). Residue threonine 384 coordinates L-serine.

It belongs to the class-II aminoacyl-tRNA synthetase family. Type-1 seryl-tRNA synthetase subfamily. As to quaternary structure, homodimer. The tRNA molecule binds across the dimer.

It is found in the cytoplasm. The enzyme catalyses tRNA(Ser) + L-serine + ATP = L-seryl-tRNA(Ser) + AMP + diphosphate + H(+). The catalysed reaction is tRNA(Sec) + L-serine + ATP = L-seryl-tRNA(Sec) + AMP + diphosphate + H(+). It participates in aminoacyl-tRNA biosynthesis; selenocysteinyl-tRNA(Sec) biosynthesis; L-seryl-tRNA(Sec) from L-serine and tRNA(Sec): step 1/1. Functionally, catalyzes the attachment of serine to tRNA(Ser). Is also able to aminoacylate tRNA(Sec) with serine, to form the misacylated tRNA L-seryl-tRNA(Sec), which will be further converted into selenocysteinyl-tRNA(Sec). The sequence is that of Serine--tRNA ligase from Dictyoglomus thermophilum (strain ATCC 35947 / DSM 3960 / H-6-12).